The chain runs to 281 residues: Penicillin-insensitive murein endopeptidase (281 aa).

A signal peptide spans 1–24 (MKQGLIGVLALALGATLLSSAVWA). 3 disulfides stabilise this stretch: C49–C270, C192–C240, and C221–C228. Positions 115, 118, 125, and 216 each coordinate Zn(2+). Positions 230–271 (EQSEPPIGDGCGAELTSWFQPKQPSSEAPEKTTPPPLPPSCQ) are disordered. Positions 246–255 (SWFQPKQPSS) are enriched in polar residues.

It belongs to the peptidase M74 family. In terms of assembly, dimer. It depends on Zn(2+) as a cofactor.

It is found in the periplasm. In terms of biological role, murein endopeptidase that cleaves the D-alanyl-meso-2,6-diamino-pimelyl amide bond that connects peptidoglycan strands. Likely plays a role in the removal of murein from the sacculus. The sequence is that of Penicillin-insensitive murein endopeptidase (mepA) from Pectobacterium atrosepticum (strain SCRI 1043 / ATCC BAA-672) (Erwinia carotovora subsp. atroseptica).